A 179-amino-acid chain; its full sequence is Large ribosomal subunit protein uL10 (179 aa).

Belongs to the universal ribosomal protein uL10 family. As to quaternary structure, part of the ribosomal stalk of the 50S ribosomal subunit. The N-terminus interacts with L11 and the large rRNA to form the base of the stalk. The C-terminus forms an elongated spine to which L12 dimers bind in a sequential fashion forming a multimeric L10(L12)X complex.

In terms of biological role, forms part of the ribosomal stalk, playing a central role in the interaction of the ribosome with GTP-bound translation factors. This is Large ribosomal subunit protein uL10 from Polynucleobacter necessarius subsp. necessarius (strain STIR1).